Reading from the N-terminus, the 272-residue chain is Putative pyruvate, phosphate dikinase regulatory protein (272 aa).

Residue glycine 153–threonine 160 coordinates ADP.

It belongs to the pyruvate, phosphate/water dikinase regulatory protein family. PDRP subfamily.

The enzyme catalyses N(tele)-phospho-L-histidyl/L-threonyl-[pyruvate, phosphate dikinase] + ADP = N(tele)-phospho-L-histidyl/O-phospho-L-threonyl-[pyruvate, phosphate dikinase] + AMP + H(+). The catalysed reaction is N(tele)-phospho-L-histidyl/O-phospho-L-threonyl-[pyruvate, phosphate dikinase] + phosphate + H(+) = N(tele)-phospho-L-histidyl/L-threonyl-[pyruvate, phosphate dikinase] + diphosphate. Bifunctional serine/threonine kinase and phosphorylase involved in the regulation of the pyruvate, phosphate dikinase (PPDK) by catalyzing its phosphorylation/dephosphorylation. The sequence is that of Putative pyruvate, phosphate dikinase regulatory protein from Chelativorans sp. (strain BNC1).